A 430-amino-acid polypeptide reads, in one-letter code: MSEAKGVGGIDPRATPGSAGAGERPPMGTVSRAGDGELYAPMPSKHMVINLGPSHPAMHGVTRAVVELNGEIIEEMKLDIGFLHRGFEKSCENVTWGQVFPYTDRLNYVSSIMNNVGFALAVEKLAKLEIPERARYLRVITSEIHRICDHLTLVGAMAMELGAMTVFLYGIEARDLLWDRLAELCGARLTSNYARIGGVARDMPEGWQEKTLKVLDRVVAIREEIGQLLNRNRIFIDRCLNTGKVSREDALELGFTGPCLRASGEPYDIRKAAPYLVYDRLDFDIPVGSNGDNFDRYLMRMEEMRQSDKIIRQCFEQMAPGEIIVQDFRYALPPKPLVYGTIEGVMAHFKLVMEGIKVPAGEVYSYTEAANGELGFYVVSDGGGRPYKLGLRAPGWPMLAALPVMTKGSLLSDLIPTFDSINMIGGEVEQ.

The tract at residues 1 to 36 (MSEAKGVGGIDPRATPGSAGAGERPPMGTVSRAGDG) is disordered.

It belongs to the complex I 49 kDa subunit family. In terms of assembly, NDH-1 is composed of 14 different subunits. Subunits NuoB, C, D, E, F, and G constitute the peripheral sector of the complex.

The protein localises to the cell inner membrane. The catalysed reaction is a quinone + NADH + 5 H(+)(in) = a quinol + NAD(+) + 4 H(+)(out). Functionally, NDH-1 shuttles electrons from NADH, via FMN and iron-sulfur (Fe-S) centers, to quinones in the respiratory chain. The immediate electron acceptor for the enzyme in this species is believed to be ubiquinone. Couples the redox reaction to proton translocation (for every two electrons transferred, four hydrogen ions are translocated across the cytoplasmic membrane), and thus conserves the redox energy in a proton gradient. The polypeptide is NADH-quinone oxidoreductase subunit D 1 (Anaeromyxobacter dehalogenans (strain 2CP-C)).